We begin with the raw amino-acid sequence, 296 residues long: Putative peptide transport system permease protein BruAb2_1032 (296 aa).

6 consecutive transmembrane segments (helical) span residues 35 to 55, 97 to 117, 131 to 151, 205 to 225, 229 to 249, and 260 to 280; these read IGLV…WITN, LWIG…IGIA, VMDA…SAAL, ILPN…AYAI, ATLS…GSIV, and WWIM…INLI. The ABC transmembrane type-1 domain occupies 97-281; the sequence is LWIGLTVAVL…ISALAINLIG (185 aa).

It belongs to the binding-protein-dependent transport system permease family. The complex is composed of two ATP-binding proteins (BruAb2_1033 and BruAb2_1034), two transmembrane proteins (BruAb2_1031 and BruAb2_1032) and a solute-binding protein (BruAb2_1030).

Its subcellular location is the cell inner membrane. Functionally, probably part of an ABC transporter complex that could be involved in peptide import. Probably responsible for the translocation of the substrate across the membrane. This is Putative peptide transport system permease protein BruAb2_1032 from Brucella abortus biovar 1 (strain 9-941).